The following is a 162-amino-acid chain: MAPIAVGDVVPDGTISFFDENDQLQTASVHSLAAGKKVILFGVPGAFTPTCSMKHVPGFIEKAEELKSKGVDEIICFSVNDPFVMKAWGKTYPENKHVKFVADGSGEYTHLLGLELDLKDKGLGVRSRRFALLLDDLKVTVANVESGGEFTVSSADDILKAL.

The region spanning 4 to 162 is the Thioredoxin domain; sequence IAVGDVVPDG…SSADDILKAL (159 aa). The active-site Cysteine sulfenic acid (-SOH) intermediate is Cys-51.

This sequence belongs to the peroxiredoxin family. Prx5 subfamily. As to quaternary structure, monomer. As to expression, expressed in all tissues but mostly in reproductive tissues such as buds, flowers, siliques and seeds.

The protein resides in the cytoplasm. The catalysed reaction is [glutaredoxin]-dithiol + a hydroperoxide = [glutaredoxin]-disulfide + an alcohol + H2O. In terms of biological role, reduces hydrogen peroxide and alkyl hydroperoxides with reducing equivalents provided through the thioredoxin or glutaredoxin system. May be involved in intracellular redox signaling. Functionally, thiol-specific peroxidase that catalyzes the reduction of hydrogen peroxide and organic hydroperoxides to water and alcohols, respectively. Plays a role in cell protection against oxidative stress by detoxifying peroxides and as sensor of hydrogen peroxide-mediated signaling events. This Arabidopsis thaliana (Mouse-ear cress) protein is Peroxiredoxin-2B (PRXIIB).